A 255-amino-acid polypeptide reads, in one-letter code: Glutamate racemase (255 aa).

Substrate-binding positions include 7 to 8 (DS) and 39 to 40 (YG). C70 functions as the Proton donor/acceptor in the catalytic mechanism. 71–72 (NT) provides a ligand contact to substrate. Catalysis depends on C181, which acts as the Proton donor/acceptor. 182–183 (TH) contacts substrate.

Belongs to the aspartate/glutamate racemases family.

It carries out the reaction L-glutamate = D-glutamate. It participates in cell wall biogenesis; peptidoglycan biosynthesis. Its function is as follows. Provides the (R)-glutamate required for cell wall biosynthesis. This chain is Glutamate racemase, found in Helicobacter pylori (strain G27).